Reading from the N-terminus, the 1500-residue chain is Copper-transporting ATPase 1 (1500 aa).

Topologically, residues 1 to 653 (MDPSMGVNSV…KREIRQWRRS (653 aa)) are cytoplasmic. HMA domains follow at residues 8 to 74 (NSVT…FDAV) and 85 to 151 (TDTL…LDTG). The Cu(+) site is built by T18, C19, and C22. A Phosphothreonine modification is found at T152. Positions 171-237 (VVLKMKVEGM…QIEAMGFPAF (67 aa)) constitute an HMA 3 domain. Residues C182 and C185 each contribute to the Cu(+) site. Phosphoserine is present on S270. Residues 277-343 (STATFIIDGM…AIEAVSPGLY (67 aa)) enclose the HMA 4 domain. 2 residues coordinate Cu(+): C288 and C291. T327 is subject to Phosphothreonine. Residues S339, S353, S357, and S362 each carry the phosphoserine modification. HMA domains lie at 377–443 (QETV…FDAT), 488–554 (SKCY…FGAT), and 564–630 (GVLE…FEAS). Cu(+) contacts are provided by C388, C391, C499, C502, C575, and C578. The chain crosses the membrane as a helical span at residues 654–675 (FLVSLFFCIPVMGLMIYMMVMD). Residues 676–714 (HHFATLHHNQNMSKEEMINLHSSMFLERQILPGLSVMNL) are Extracellular-facing. N686 carries N-linked (GlcNAc...) asparagine glycosylation. Residues 715 to 734 (LSFLLCVPVQFFGGWYFYIQ) form a helical membrane-spanning segment. Residues 735-741 (AYKALKH) are Cytoplasmic-facing. Residues 742-762 (KTANMDVLIVLATTIAFAYSL) traverse the membrane as a helical segment. At 763 to 781 (IILLVAMYERAKVNPITFF) the chain is on the extracellular side. The helical transmembrane segment at 782 to 802 (DTPPMLFVFIALGRWLEHIAK) threads the bilayer. Residues 803 to 936 (GKTSEALAKL…KAPIQQFADK (134 aa)) lie on the Cytoplasmic side of the membrane. The helical transmembrane segment at 937 to 959 (LSGYFVPFIVFVSIATLLVWIVI) threads the bilayer. Topologically, residues 960–989 (GFLNFEIVETYFPGYNRSISRTETIIRFAF) are extracellular. An N-linked (GlcNAc...) asparagine glycan is attached at N975. A helical membrane pass occupies residues 990 to 1011 (QASITVLCIACPCSLGLATPTA). Topologically, residues 1012 to 1356 (VMVGTGVGAQ…LSRKTVKRIR (345 aa)) are cytoplasmic. Catalysis depends on D1044, which acts as the 4-aspartylphosphate intermediate. E1081 lines the ATP pocket. Residue T1212 is modified to Phosphothreonine. Mg(2+) contacts are provided by D1301 and D1305. A helical transmembrane segment spans residues 1357–1374 (INFVFALIYNLVGIPIAA). The Extracellular portion of the chain corresponds to 1375 to 1385 (GVFMPIGLVLQ). Residues 1386 to 1405 (PWMGSAAMAASSVSVVLSSL) traverse the membrane as a helical segment. Topologically, residues 1406–1500 (FLKLYRKPTY…DFREDDDTAL (95 aa)) are cytoplasmic. Phosphoserine is present on residues S1430, S1432, S1460, S1463, and S1466. The Endocytosis signal signature appears at 1467–1468 (LL). Residues S1469, S1473, S1476, and S1486 each carry the phosphoserine modification. Residues 1486–1500 (SLLVGDFREDDDTAL) form a PDZD11-binding region. Residues 1487 to 1488 (LL) carry the Endocytosis signal motif.

The protein belongs to the cation transport ATPase (P-type) (TC 3.A.3) family. Type IB subfamily. As to quaternary structure, monomer. Interacts with PDZD11. Interacts with ATOX1 and COMMD1. Interacts with TYRP1. Directly interacts with SOD3; this interaction is copper-dependent and is required for SOD3 activity. As to expression, widely expressed including in heart, brain, lung, muscle, kidney, pancreas, and to a lesser extent placenta. Expressed in fibroblasts, aortic smooth muscle cells, aortic endothelial cells and umbilical vein endothelial cells (at protein level). Expressed in cerebellum and brain cortex.

It localises to the golgi apparatus. The protein localises to the trans-Golgi network membrane. Its subcellular location is the cell membrane. The protein resides in the melanosome membrane. It is found in the early endosome membrane. It localises to the cell projection. The protein localises to the axon. Its subcellular location is the dendrite. The protein resides in the postsynaptic density. It is found in the cytoplasm. It localises to the cytosol. The protein localises to the endoplasmic reticulum. The catalysed reaction is Cu(+)(in) + ATP + H2O = Cu(+)(out) + ADP + phosphate + H(+). Its function is as follows. ATP-driven copper (Cu(+)) ion pump that plays an important role in intracellular copper ion homeostasis. Within a catalytic cycle, acquires Cu(+) ion from donor protein on the cytoplasmic side of the membrane and delivers it to acceptor protein on the lumenal side. The transfer of Cu(+) ion across the membrane is coupled to ATP hydrolysis and is associated with a transient phosphorylation that shifts the pump conformation from inward-facing to outward-facing state. Under physiological conditions, at low cytosolic copper concentration, it is localized at the trans-Golgi network (TGN) where it transfers Cu(+) ions to cuproenzymes of the secretory pathway. Upon elevated cytosolic copper concentrations, it relocalizes to the plasma membrane where it is responsible for the export of excess Cu(+) ions. May play a dual role in neuron function and survival by regulating cooper efflux and neuronal transmission at the synapse as well as by supplying Cu(+) ions to enzymes such as PAM, TYR and SOD3. In the melanosomes of pigmented cells, provides copper cofactor to TYR to form an active TYR holoenzyme for melanin biosynthesis. The protein is Copper-transporting ATPase 1 of Homo sapiens (Human).